The following is a 185-amino-acid chain: Celestoxin (185 aa).

Positions 1-20 (MKFIAAVLLVALLCPKDSTS) are cleaved as a signal peptide. The propeptide occupies 21–148 (LASRLSGLLG…GLPVALPVSV (128 aa)).

In terms of tissue distribution, expressed by the mandibular venom gland.

The protein resides in the secreted. Functionally, has a hypotensive activity. This chain is Celestoxin, found in Caribicus warreni (Haitian giant galliwasp).